The chain runs to 144 residues: Actin-associated protein FAM107A (144 aa).

Residues 67-94 (LQRVLEHRRRNQLIKKKKEELEAKRLQC) adopt a coiled-coil conformation. Positions 74–84 (RRRNQLIKKKK) match the Nuclear localization signal motif. Residues 105–124 (QRLNQLEKPPEKEEDHAPEF) are disordered. Residues 112–124 (KPPEKEEDHAPEF) are compositionally biased toward basic and acidic residues.

The protein belongs to the FAM107 family. In terms of assembly, interacts with ACTB. Interacts with COMMD1; this interaction stabilizes COMMD1 in the nucleus. Interacts with MAP1A. Interacts with PRDX1. Interacts with F-actin.

It localises to the nucleus. The protein localises to the cytoplasm. The protein resides in the cytoskeleton. It is found in the stress fiber. Its subcellular location is the cell junction. It localises to the focal adhesion. The protein localises to the cell projection. The protein resides in the ruffle membrane. It is found in the synapse. In terms of biological role, stress-inducible actin-binding protein that plays a role in synaptic and cognitive functions by modulating actin filamentous (F-actin) dynamics. Mediates polymerization of globular actin to F-actin. Also binds to, stabilizes and bundles F-actin. Involved in synaptic function by regulating neurite outgrowth in an actin-dependent manner and for the acquisition of hippocampus-dependent cognitive function, such as learning and long-term memory. Plays a role in the actin and microtubule cytoskeleton organization; negatively regulates focal adhesion (FA) assembly promoting malignant glial cell migration in an actin-, microtubule- and MAP1A-dependent manner. Also involved in neuroblastoma G1/S phase cell cycle progression and cell proliferation inhibition by stimulating ubiquitination of NF-kappa-B subunit RELA and NF-kappa-B degradation in a COMMD1- and actin-dependent manner. May play a role in tumor development. This Pan troglodytes (Chimpanzee) protein is Actin-associated protein FAM107A (FAM107A).